Reading from the N-terminus, the 220-residue chain is Large ribosomal subunit protein uL16z (220 aa).

It belongs to the universal ribosomal protein uL16 family. In terms of assembly, component of the small ribosomal subunit. Mature ribosomes consist of a small (40S) and a large (60S) subunit. The 40S subunit contains about 33 different proteins and 1 molecule of RNA (18S). The 60S subunit contains about 49 different proteins and 3 molecules of RNA (25S, 5.8S and 5S). Interacts with NIK1. Interacts with LIMYB. Post-translationally, phosphorylated by NIK1 and NIK2 in vitro. As to expression, ubiquitous, with the highest expression in flowers. Expressed in seedlings, leaves, roots, stems and flowers. Expressed in young leaves, mostly in dividing cells and in the hydathodes, in the root tips and lateral root primordia, in pistils, anthers, and pollen grains, and in developing seeds.

It localises to the cytoplasm. Its subcellular location is the nucleus. Ribosomal protein involved in translational regulation. Contribute to general translation under UV-B stress. Involved in the NIK1-mediated defense response to geminivirus infection. Acts coordinately with LIMYB as a transcriptional repressor. The polypeptide is Large ribosomal subunit protein uL16z (Arabidopsis thaliana (Mouse-ear cress)).